The sequence spans 494 residues: tRNA-2-methylthio-N(6)-dimethylallyladenosine synthase (494 aa).

Positions 5–121 constitute an MTTase N-terminal domain; it reads RTYQVRTYGC…LPALLERARV (117 aa). The [4Fe-4S] cluster site is built by Cys14, Cys50, Cys84, Cys158, Cys162, and Cys165. The Radical SAM core domain occupies 144 to 374; the sequence is RESVYAAWVA…LELQERISEE (231 aa). Residues 377–446 form the TRAM domain; sequence AKFVGREVEV…PHHLVADSGI (70 aa). A compositionally biased stretch (basic and acidic residues) spans 458-468; sequence WEARNAPERRP. The interval 458 to 494 is disordered; sequence WEARNAPERRPTGVLLGMPKVGAPEPQPSVVGGCCDS.

This sequence belongs to the methylthiotransferase family. MiaB subfamily. As to quaternary structure, monomer. It depends on [4Fe-4S] cluster as a cofactor.

The protein localises to the cytoplasm. It carries out the reaction N(6)-dimethylallyladenosine(37) in tRNA + (sulfur carrier)-SH + AH2 + 2 S-adenosyl-L-methionine = 2-methylsulfanyl-N(6)-dimethylallyladenosine(37) in tRNA + (sulfur carrier)-H + 5'-deoxyadenosine + L-methionine + A + S-adenosyl-L-homocysteine + 2 H(+). Its function is as follows. Catalyzes the methylthiolation of N6-(dimethylallyl)adenosine (i(6)A), leading to the formation of 2-methylthio-N6-(dimethylallyl)adenosine (ms(2)i(6)A) at position 37 in tRNAs that read codons beginning with uridine. This chain is tRNA-2-methylthio-N(6)-dimethylallyladenosine synthase, found in Thermobifida fusca (strain YX).